Reading from the N-terminus, the 540-residue chain is GMP synthase [glutamine-hydrolyzing] (540 aa).

The Glutamine amidotransferase type-1 domain maps to I26 to T216. C103 acts as the Nucleophile in catalysis. Residues H190 and E192 contribute to the active site. The region spanning W217–R415 is the GMPS ATP-PPase domain. ATP is bound at residue S244 to S250.

In terms of assembly, homodimer.

It carries out the reaction XMP + L-glutamine + ATP + H2O = GMP + L-glutamate + AMP + diphosphate + 2 H(+). It functions in the pathway purine metabolism; GMP biosynthesis; GMP from XMP (L-Gln route): step 1/1. In terms of biological role, catalyzes the synthesis of GMP from XMP. In Trichormus variabilis (strain ATCC 29413 / PCC 7937) (Anabaena variabilis), this protein is GMP synthase [glutamine-hydrolyzing].